A 294-amino-acid polypeptide reads, in one-letter code: Elongation factor Ts (294 aa).

Residues 80 to 83 (TDFV) form an involved in Mg(2+) ion dislocation from EF-Tu region.

This sequence belongs to the EF-Ts family.

Its subcellular location is the cytoplasm. In terms of biological role, associates with the EF-Tu.GDP complex and induces the exchange of GDP to GTP. It remains bound to the aminoacyl-tRNA.EF-Tu.GTP complex up to the GTP hydrolysis stage on the ribosome. In Listeria monocytogenes serovar 1/2a (strain ATCC BAA-679 / EGD-e), this protein is Elongation factor Ts.